Reading from the N-terminus, the 654-residue chain is Probable replication restart protein PriA (654 aa).

Zn(2+) is bound by residues Cys-367, Cys-370, Cys-376, Cys-379, Cys-395, Cys-398, Cys-407, and Cys-410.

The protein belongs to the helicase family. PriA subfamily. As to quaternary structure, component of the replication restart primosome. Zn(2+) serves as cofactor.

Its function is as follows. Initiates the restart of stalled replication forks, which reloads the replicative helicase on sites other than the origin of replication. Recognizes and binds to abandoned replication forks and remodels them to uncover a helicase loading site. Promotes assembly of the primosome at these replication forks. The protein is Probable replication restart protein PriA of Mycobacterium tuberculosis (strain CDC 1551 / Oshkosh).